A 476-amino-acid chain; its full sequence is Eukaryotic translation initiation factor 3 subunit L (476 aa).

The 196-residue stretch at 257–452 (DAIRMFSHIL…DLDYALEKDL (196 aa)) folds into the PCI domain.

The protein belongs to the eIF-3 subunit L family. Component of the eukaryotic translation initiation factor 3 (eIF-3) complex.

It is found in the cytoplasm. Component of the eukaryotic translation initiation factor 3 (eIF-3) complex, which is involved in protein synthesis of a specialized repertoire of mRNAs and, together with other initiation factors, stimulates binding of mRNA and methionyl-tRNAi to the 40S ribosome. The eIF-3 complex specifically targets and initiates translation of a subset of mRNAs involved in cell proliferation. The polypeptide is Eukaryotic translation initiation factor 3 subunit L (Aspergillus terreus (strain NIH 2624 / FGSC A1156)).